The following is a 255-amino-acid chain: Adenosylcobinamide-GDP ribazoletransferase (255 aa).

6 helical membrane-spanning segments follow: residues 43-63 (LVGTLLGLLCVLVYAFASLFF), 64-84 (PYQVAIVLMMAFSLLLTGAFH), 113-133 (IGTYGSATLTMALIGKFVFLT), 141-161 (FGLMIVVAYTLSRAVAATLIY), 195-215 (LAAISLGLGVGLLLILFAILF), and 234-254 (CLGGAQQLMELGIYLVLIAVV).

This sequence belongs to the CobS family. Mg(2+) is required as a cofactor.

It is found in the cell inner membrane. It carries out the reaction alpha-ribazole + adenosylcob(III)inamide-GDP = adenosylcob(III)alamin + GMP + H(+). It catalyses the reaction alpha-ribazole 5'-phosphate + adenosylcob(III)inamide-GDP = adenosylcob(III)alamin 5'-phosphate + GMP + H(+). It participates in cofactor biosynthesis; adenosylcobalamin biosynthesis; adenosylcobalamin from cob(II)yrinate a,c-diamide: step 7/7. Its function is as follows. Joins adenosylcobinamide-GDP and alpha-ribazole to generate adenosylcobalamin (Ado-cobalamin). Also synthesizes adenosylcobalamin 5'-phosphate from adenosylcobinamide-GDP and alpha-ribazole 5'-phosphate. This is Adenosylcobinamide-GDP ribazoletransferase from Vibrio vulnificus (strain CMCP6).